We begin with the raw amino-acid sequence, 383 residues long: Pantothenate kinase 1 (383 aa).

Belongs to the type II pantothenate kinase family. As to expression, highly expressed in leaves and developing seeds. Expressed in roots, stems and flowers.

The enzyme catalyses (R)-pantothenate + ATP = (R)-4'-phosphopantothenate + ADP + H(+). It participates in cofactor biosynthesis; coenzyme A biosynthesis; CoA from (R)-pantothenate: step 1/5. Regulated by feedback inhibition by malonyl-CoA. Catalyzes the phosphorylation of pantothenate the first step in CoA biosynthesis. May play a role in the physiological regulation of the intracellular CoA concentration. Functionally redudant with PANK2. In Arabidopsis thaliana (Mouse-ear cress), this protein is Pantothenate kinase 1 (PANK1).